The primary structure comprises 360 residues: Aurora kinase B (360 aa).

In terms of domain architecture, Protein kinase spans 93 to 343; the sequence is FDIGRPLGKG…LKGVMEHPWV (251 aa). ATP-binding positions include 99–107 and Lys-122; that span reads LGKGKFGNV. The active-site Proton acceptor is Asp-216.

The protein belongs to the protein kinase superfamily. Ser/Thr protein kinase family. Aurora subfamily. Component of the chromosomal passenger complex (CPC).

Its subcellular location is the nucleus. It is found in the chromosome. The protein resides in the centromere. It localises to the cytoplasm. The protein localises to the cytoskeleton. Its subcellular location is the spindle. It is found in the midbody. The catalysed reaction is L-seryl-[protein] + ATP = O-phospho-L-seryl-[protein] + ADP + H(+). It carries out the reaction L-threonyl-[protein] + ATP = O-phospho-L-threonyl-[protein] + ADP + H(+). Kinase activity is stimulated by cell-cycle specific phosphorylation. Functionally, serine/threonine-protein kinase component of the chromosomal passenger complex (CPC), a complex that acts as a key regulator of mitosis. The CPC complex has essential functions at the centromere in ensuring correct chromosome alignment and segregation and is required for chromatin-induced microtubule stabilization and spindle assembly. Involved in the bipolar attachment of spindle microtubules to kinetochores and is a key regulator for the onset of cytokinesis during mitosis. Required for central/midzone spindle assembly and cleavage furrow formation. Key component of the cytokinesis checkpoint, a process required to delay abscission to prevent both premature resolution of intercellular chromosome bridges and accumulation of DNA damage. Phosphorylates 'Ser-10' of histone H3 during mitosis. In Xenopus tropicalis (Western clawed frog), this protein is Aurora kinase B.